Here is a 391-residue protein sequence, read N- to C-terminus: Alanine racemase (391 aa).

Lys38 acts as the Proton acceptor; specific for D-alanine in catalysis. Lys38 carries the N6-(pyridoxal phosphate)lysine modification. Position 136 (Arg136) interacts with substrate. The Proton acceptor; specific for L-alanine role is filled by Tyr267. Met315 lines the substrate pocket.

This sequence belongs to the alanine racemase family. It depends on pyridoxal 5'-phosphate as a cofactor.

It carries out the reaction L-alanine = D-alanine. It participates in amino-acid biosynthesis; D-alanine biosynthesis; D-alanine from L-alanine: step 1/1. Functionally, catalyzes the interconversion of L-alanine and D-alanine. May also act on other amino acids. The sequence is that of Alanine racemase (alr) from Clostridium kluyveri (strain ATCC 8527 / DSM 555 / NBRC 12016 / NCIMB 10680 / K1).